Reading from the N-terminus, the 463-residue chain is L-cystine uptake protein TcyP (463 aa).

10 consecutive transmembrane segments (helical) span residues 3-23 (TLLV…LFVM), 34-54 (VFTA…IYGP), 73-93 (YVKL…LGAF), 105-125 (ISGL…AVGI), 184-204 (PTST…FLGV), 225-245 (IVMR…LAIM), 262-282 (MFVI…LLLL), 338-358 (LSIG…MMIA), 369-389 (VFII…AGVG), and 394-414 (FAAL…GLLI).

It belongs to the dicarboxylate/amino acid:cation symporter (DAACS) (TC 2.A.23) family.

The protein resides in the cell membrane. Its function is as follows. Mediates uptake of L-cystine, the oxidized form of L-cysteine. Although it is more specific for L-cystine, it could also transport a much broader range of amino acids and sulfur compounds including S-methylcysteine. This chain is L-cystine uptake protein TcyP (tcyP), found in Bacillus subtilis (strain 168).